We begin with the raw amino-acid sequence, 77 residues long: Cell division topological specificity factor (77 aa).

This sequence belongs to the MinE family.

Prevents the cell division inhibition by proteins MinC and MinD at internal division sites while permitting inhibition at polar sites. This ensures cell division at the proper site by restricting the formation of a division septum at the midpoint of the long axis of the cell. The polypeptide is Cell division topological specificity factor (Nautilia profundicola (strain ATCC BAA-1463 / DSM 18972 / AmH)).